A 184-amino-acid polypeptide reads, in one-letter code: Class II hydrophobin 6 (184 aa).

The first 16 residues, 1–16, serve as a signal peptide directing secretion; it reads MNFMLLSAALASMAVA. 4 disulfide bridges follow: Cys122–Cys169, Cys130–Cys160, Cys131–Cys143, and Cys170–Cys181.

Belongs to the cerato-ulmin hydrophobin family. Homotetramer. Further self-assembles to form highly ordered films at water-air interfaces through intermolecular interactions. In terms of tissue distribution, expressed in the mycellium.

It is found in the secreted. Its function is as follows. Aerial growth, conidiation, and dispersal of filamentous fungi in the environment rely upon a capability of their secreting small amphipathic proteins called hydrophobins (HPBs) with low sequence identity. Class I can self-assemble into an outermost layer of rodlet bundles on aerial cell surfaces, conferring cellular hydrophobicity that supports fungal growth, development and dispersal; whereas Class II form highly ordered films at water-air interfaces through intermolecular interactions but contribute nothing to the rodlet structure. Hcf-6 is a class II hydrophobin that is involved in adhesion and in tomato plants infection. Is secreted to form a coat both around and beneath the fungus. The sequence is that of Class II hydrophobin 6 from Passalora fulva (Tomato leaf mold).